The chain runs to 98 residues: UPF0175 protein VNG_0066H (98 aa).

This sequence belongs to the UPF0175 family.

The sequence is that of UPF0175 protein VNG_0066H from Halobacterium salinarum (strain ATCC 700922 / JCM 11081 / NRC-1) (Halobacterium halobium).